Here is a 386-residue protein sequence, read N- to C-terminus: Patatin-16 (386 aa).

An N-terminal signal peptide occupies residues 1–23; that stretch reads MATTKSFLILIVMILATTSSTFA. The PNPLA domain maps to 32 to 229; the sequence is LSIDGGGIKG…TVADPALLSV (198 aa). The short motif at 36-41 is the GXGXXG element; sequence GGGIKG. The GXSXG motif lies at 75-79; sequence GTSTG. Serine 77 serves as the catalytic Nucleophile. N-linked (GlcNAc...) asparagine glycosylation is present at asparagine 115. Aspartate 215 serves as the catalytic Proton acceptor. The DGA/G signature appears at 215–217; the sequence is DGA. Residues 360-384 adopt a coiled-coil conformation; the sequence is ETYEEALKRFAKLLSDRKKLRANKA.

This sequence belongs to the patatin family.

The protein localises to the vacuole. Its function is as follows. Probable lipolytic acyl hydrolase (LAH), an activity which is thought to be involved in the response of tubers to pathogens. This is Patatin-16 from Solanum tuberosum (Potato).